The sequence spans 121 residues: Large ribosomal subunit protein uL18 (121 aa).

It belongs to the universal ribosomal protein uL18 family. In terms of assembly, part of the 50S ribosomal subunit; part of the 5S rRNA/L5/L18/L25 subcomplex. Contacts the 5S and 23S rRNAs.

In terms of biological role, this is one of the proteins that bind and probably mediate the attachment of the 5S RNA into the large ribosomal subunit, where it forms part of the central protuberance. This is Large ribosomal subunit protein uL18 from Roseiflexus castenholzii (strain DSM 13941 / HLO8).